We begin with the raw amino-acid sequence, 340 residues long: Alcohol dehydrogenase patD (340 aa).

C46 lines the Zn(2+) pocket. H47 contributes to the NAD(+) binding site. Positions 67, 68, 101, 104, 112, and 154 each coordinate Zn(2+). Residue H67 coordinates substrate. NAD(+)-binding positions include 178–183 (GLGGLG), 198–203 (VALSRD), K206, 265–267 (LSI), 289–291 (PSG), and 297–299 (EDA).

The protein belongs to the zinc-containing alcohol dehydrogenase family. It depends on Zn(2+) as a cofactor.

It localises to the cytoplasm. Its subcellular location is the cytosol. It carries out the reaction neopatulin + NADPH + H(+) = (E)-ascladiol + NADP(+). It functions in the pathway mycotoxin biosynthesis; patulin biosynthesis. Functionally, alcohol dehydrogenase; part of the gene cluster that mediates the biosynthesis of patulin, an acetate-derived tetraketide mycotoxin produced by several fungal species that shows antimicrobial properties against several bacteria. PatD catalyzes the conversion of neopatulin into E-ascladiol. The pathway begins with the synthesis of 6-methylsalicylic acid by the polyketide synthase (PKS) patK via condensation of acetate and malonate units. The 6-methylsalicylic acid decarboxylase patG then catalyzes the decarboxylation of 6-methylsalicylic acid to yield m-cresol (also known as 3-methylphenol). These first reactions occur in the cytosol. The intermediate m-cresol is then transported into the endoplasmic reticulum where the cytochrome P450 monooxygenase patH converts it to m-hydroxybenzyl alcohol, which is further converted to gentisyl alcohol by the cytochrome P450 monooxygenase patI. The oxidoreductases patJ and patO further convert gentisyl alcohol to isoepoxydon in the vacuole. PatN catalyzes then the transformation of isoepoxydon into phyllostine. The cluster protein patF is responsible for the conversion from phyllostine to neopatulin whereas the alcohol dehydrogenase patD converts neopatulin to E-ascladiol. The steps between isoepoxydon and E-ascladiol occur in the cytosol, and E-ascladiol is probably secreted to the extracellular space by one of the cluster-specific transporters patC or patM. Finally, the secreted patulin synthase patE catalyzes the conversion of E-ascladiol to patulin. In Penicillium expansum (Blue mold rot fungus), this protein is Alcohol dehydrogenase patD.